The primary structure comprises 177 residues: Probable inosine/xanthosine triphosphatase (177 aa).

Belongs to the YjjX NTPase family. As to quaternary structure, homodimer. Requires Mg(2+) as cofactor. The cofactor is Mn(2+).

It carries out the reaction XTP + H2O = XDP + phosphate + H(+). The catalysed reaction is ITP + H2O = IDP + phosphate + H(+). Its function is as follows. Phosphatase that hydrolyzes non-canonical purine nucleotides such as XTP and ITP to their respective diphosphate derivatives. Probably excludes non-canonical purines from DNA/RNA precursor pool, thus preventing their incorporation into DNA/RNA and avoiding chromosomal lesions. This Pyrobaculum arsenaticum (strain DSM 13514 / JCM 11321 / PZ6) protein is Probable inosine/xanthosine triphosphatase.